A 116-amino-acid chain; its full sequence is MIYGKMMGNTVLKNTGVFYQVIKPLKLHLLYDHSFSLFLKKQPNMGEISPFPYLLSYSYHVIVYLCVLCKVYILYSFVKDFSICLPFSYGSSLLYSLCSNLYIYIYAALPKSKIKL.

The next 2 helical transmembrane spans lie at 55–77 and 87–109; these read LSYS…LYSF and FSYG…YAAL.

The protein resides in the membrane. This is an uncharacterized protein from Saccharomyces cerevisiae (strain ATCC 204508 / S288c) (Baker's yeast).